A 157-amino-acid polypeptide reads, in one-letter code: Protein Smg (157 aa).

It belongs to the Smg family.

The chain is Protein Smg from Sodalis glossinidius (strain morsitans).